The following is a 93-amino-acid chain: MMIDKLSGLDPVQNLRASCASEHVARAPAGDEITVSAEAQKKAELYLALEAVRSAPDVREYKIAAAEQKLADPAYLERALSHVVERFLEEQNL.

This is an uncharacterized protein from Treponema pallidum (strain Nichols).